We begin with the raw amino-acid sequence, 543 residues long: Periplasmic oligopeptide-binding protein OppA (543 aa).

An N-terminal signal peptide occupies residues 1 to 26 (MSNITKKSLIAAGILTALIAASAATA). A disulfide bridge connects residues C297 and C443.

Belongs to the bacterial solute-binding protein 5 family. As to quaternary structure, the complex is composed of two ATP-binding proteins (OppD and OppF), two transmembrane proteins (OppB and OppC) and a solute-binding protein (OppA).

Its subcellular location is the periplasm. In terms of biological role, part of the ABC transporter complex OppABCDF involved in the uptake of oligopeptides, including the cell wall murein tripeptide L-alanyl-gamma-D-glutamyl-meso-diaminopimelate. Plays an important nutritional role and is involved in the recycling of cell wall peptides. Binds peptides containing from two to five amino acid residues regardless of their sequence. Also binds cell wall peptides, such as L-alanyl-gamma-D-glutamyl-meso-diaminopimelate. The chain is Periplasmic oligopeptide-binding protein OppA from Salmonella typhimurium (strain LT2 / SGSC1412 / ATCC 700720).